The chain runs to 490 residues: Dual specificity protein kinase CLK3 (490 aa).

Residues 1-138 (MHHCKRYRSP…SKRSSRSVED (138 aa)) form a disordered region. Phosphotyrosine is present on Y7. Residues S9, S49, S51, S67, S76, and S78 each carry the phosphoserine modification. 2 stretches are compositionally biased toward basic and acidic residues: residues 26-56 (YSRE…DRIP) and 63-76 (EHRD…EERS). A compositionally biased stretch (basic residues) spans 88 to 116 (RSRHRRRSRERAPYRTRKHAHHCHKRRTR). Residues 117-130 (SCSSASSRSQQSSK) are compositionally biased toward low complexity. S135 is modified (phosphoserine). Positions 156–472 (YEIVGNLGEG…LAEALLHPFF (317 aa)) constitute a Protein kinase domain. ATP is bound by residues 162–170 (LGEGTFGKV) and K186. The active-site Proton acceptor is the D283.

It belongs to the protein kinase superfamily. CMGC Ser/Thr protein kinase family. Lammer subfamily. Autophosphorylates on all three types of residues. In terms of tissue distribution, present at high levels in testis and ovary. In testis, expression is restricted to elongated, maturing spermatozoa. Also present in spleen, brain, lung and liver (at protein level).

The protein resides in the nucleus. Its subcellular location is the cytoplasm. It localises to the cytoplasmic vesicle. The protein localises to the secretory vesicle. It is found in the acrosome. It catalyses the reaction L-seryl-[protein] + ATP = O-phospho-L-seryl-[protein] + ADP + H(+). The catalysed reaction is L-threonyl-[protein] + ATP = O-phospho-L-threonyl-[protein] + ADP + H(+). It carries out the reaction L-tyrosyl-[protein] + ATP = O-phospho-L-tyrosyl-[protein] + ADP + H(+). With respect to regulation, leucettine L41 inhibits its kinase activity and affects the regulation of alternative splicing mediated by phosphorylation of SR proteins. Its function is as follows. Dual specificity kinase acting on both serine/threonine and tyrosine-containing substrates. Phosphorylates serine- and arginine-rich (SR) proteins of the spliceosomal complex. May be a constituent of a network of regulatory mechanisms that enable SR proteins to control RNA splicing and can cause redistribution of SR proteins from speckles to a diffuse nucleoplasmic distribution. Phosphorylates SRSF1 and SRSF3. Regulates the alternative splicing of tissue factor (F3) pre-mRNA in endothelial cells. The sequence is that of Dual specificity protein kinase CLK3 from Mus musculus (Mouse).